We begin with the raw amino-acid sequence, 199 residues long: FMN-dependent NADH:quinone oxidoreductase 2 (199 aa).

Residues Ser10, 16 to 18, and 96 to 99 each bind FMN; these read SVS and MYNF.

This sequence belongs to the azoreductase type 1 family. Homodimer. FMN serves as cofactor.

The enzyme catalyses 2 a quinone + NADH + H(+) = 2 a 1,4-benzosemiquinone + NAD(+). The catalysed reaction is N,N-dimethyl-1,4-phenylenediamine + anthranilate + 2 NAD(+) = 2-(4-dimethylaminophenyl)diazenylbenzoate + 2 NADH + 2 H(+). Quinone reductase that provides resistance to thiol-specific stress caused by electrophilic quinones. In terms of biological role, also exhibits azoreductase activity. Catalyzes the reductive cleavage of the azo bond in aromatic azo compounds to the corresponding amines. This Pseudomonas putida (strain ATCC 47054 / DSM 6125 / CFBP 8728 / NCIMB 11950 / KT2440) protein is FMN-dependent NADH:quinone oxidoreductase 2.